A 318-amino-acid polypeptide reads, in one-letter code: Ribose-phosphate pyrophosphokinase (318 aa).

ATP contacts are provided by residues 46 to 48 and 105 to 106; these read DGE and RQ. Mg(2+)-binding residues include H139 and D178. The active site involves K201. Residues R203, D227, and 231 to 235 each bind D-ribose 5-phosphate; that span reads DTAGT.

It belongs to the ribose-phosphate pyrophosphokinase family. Class I subfamily. As to quaternary structure, homohexamer. Mg(2+) is required as a cofactor.

The protein resides in the cytoplasm. It catalyses the reaction D-ribose 5-phosphate + ATP = 5-phospho-alpha-D-ribose 1-diphosphate + AMP + H(+). It functions in the pathway metabolic intermediate biosynthesis; 5-phospho-alpha-D-ribose 1-diphosphate biosynthesis; 5-phospho-alpha-D-ribose 1-diphosphate from D-ribose 5-phosphate (route I): step 1/1. Functionally, involved in the biosynthesis of the central metabolite phospho-alpha-D-ribosyl-1-pyrophosphate (PRPP) via the transfer of pyrophosphoryl group from ATP to 1-hydroxyl of ribose-5-phosphate (Rib-5-P). The sequence is that of Ribose-phosphate pyrophosphokinase from Helicobacter pylori (strain J99 / ATCC 700824) (Campylobacter pylori J99).